The sequence spans 215 residues: Methylthioribulose-1-phosphate dehydratase (215 aa).

The Zn(2+) site is built by His103 and His105.

This sequence belongs to the aldolase class II family. MtnB subfamily. The cofactor is Zn(2+).

The catalysed reaction is 5-(methylsulfanyl)-D-ribulose 1-phosphate = 5-methylsulfanyl-2,3-dioxopentyl phosphate + H2O. It participates in amino-acid biosynthesis; L-methionine biosynthesis via salvage pathway; L-methionine from S-methyl-5-thio-alpha-D-ribose 1-phosphate: step 2/6. Catalyzes the dehydration of methylthioribulose-1-phosphate (MTRu-1-P) into 2,3-diketo-5-methylthiopentyl-1-phosphate (DK-MTP-1-P). In Sulfurihydrogenibium sp. (strain YO3AOP1), this protein is Methylthioribulose-1-phosphate dehydratase.